The chain runs to 83 residues: Apolipoprotein C-I, basic form (83 aa).

Positions 1–26 are cleaved as a signal peptide; that stretch reads MRLFLSLPVLVVVLSMVLEGPAPAQG.

The protein belongs to the apolipoprotein C1 family.

The protein resides in the secreted. In terms of biological role, inhibitor of lipoprotein binding to the low density lipoprotein (LDL) receptor, LDL receptor-related protein, and very low density lipoprotein (VLDL) receptor. Associates with high density lipoproteins (HDL) and the triacylglycerol-rich lipoproteins in the plasma and makes up about 10% of the protein of the VLDL and 2% of that of HDL. Appears to interfere directly with fatty acid uptake and is also the major plasma inhibitor of cholesteryl ester transfer protein (CETP). Binds free fatty acids and reduces their intracellular esterification. Modulates the interaction of APOE with beta-migrating VLDL and inhibits binding of beta-VLDL to the LDL receptor-related protein. This chain is Apolipoprotein C-I, basic form (APOC1B), found in Colobus guereza (Mantled guereza).